We begin with the raw amino-acid sequence, 159 residues long: Probable histone H2A.5 (159 aa).

Residues 1–10 are compositionally biased toward gly residues; the sequence is MDAAGAGAGG. 2 disordered regions span residues 1–29 and 136–159; these read MDAA…KKAV and EKAA…PKKA. Basic residues-rich tracts occupy residues 11–29 and 148–159; these read KLKK…KKAV and PKKAAGKSPKKA. Short sequence motifs (SPKK motif) lie at residues 147-150 and 155-158; these read SPKK.

This sequence belongs to the histone H2A family. As to quaternary structure, the nucleosome is a histone octamer containing two molecules each of H2A, H2B, H3 and H4 assembled in one H3-H4 heterotetramer and two H2A-H2B heterodimers. The octamer wraps approximately 147 bp of DNA.

It localises to the nucleus. The protein resides in the chromosome. Its function is as follows. Core component of nucleosome. Nucleosomes wrap and compact DNA into chromatin, limiting DNA accessibility to the cellular machineries which require DNA as a template. Histones thereby play a central role in transcription regulation, DNA repair, DNA replication and chromosomal stability. DNA accessibility is regulated via a complex set of post-translational modifications of histones, also called histone code, and nucleosome remodeling. In Oryza sativa subsp. indica (Rice), this protein is Probable histone H2A.5.